The primary structure comprises 137 residues: Small ribosomal subunit protein uS9 (137 aa).

Basic and acidic residues predominate over residues 105–117 (LKVEGYLTRDPRA). The segment at 105-137 (LKVEGYLTRDPRAKERKKYGLRKARKAPQYSKR) is disordered. Positions 118–137 (KERKKYGLRKARKAPQYSKR) are enriched in basic residues.

This sequence belongs to the universal ribosomal protein uS9 family.

This is Small ribosomal subunit protein uS9 from Cyanothece sp. (strain PCC 7425 / ATCC 29141).